Reading from the N-terminus, the 249-residue chain is Uridylate kinase (249 aa).

13–16 (KLSG) is a binding site for ATP. Gly55 contributes to the UMP binding site. 2 residues coordinate ATP: Gly56 and Arg60. Residues Asp75 and 136 to 143 (IGNPFFTT) each bind UMP. 3 residues coordinate ATP: Thr163, Phe169, and Asp172.

Belongs to the UMP kinase family. In terms of assembly, homohexamer.

The protein localises to the cytoplasm. It carries out the reaction UMP + ATP = UDP + ADP. It participates in pyrimidine metabolism; CTP biosynthesis via de novo pathway; UDP from UMP (UMPK route): step 1/1. With respect to regulation, inhibited by UTP. Functionally, catalyzes the reversible phosphorylation of UMP to UDP. The sequence is that of Uridylate kinase from Baumannia cicadellinicola subsp. Homalodisca coagulata.